We begin with the raw amino-acid sequence, 662 residues long: Glycogen debranching enzyme (662 aa).

The active-site Nucleophile is the Asp-338. Glu-373 functions as the Proton donor in the catalytic mechanism.

Belongs to the glycosyl hydrolase 13 family.

The enzyme catalyses Hydrolysis of (1-&gt;6)-alpha-D-glucosidic linkages to branches with degrees of polymerization of three or four glucose residues in limit dextrin.. Its pathway is glycan degradation; glycogen degradation. In terms of biological role, removes maltotriose and maltotetraose chains that are attached by 1,6-alpha-linkage to the limit dextrin main chain, generating a debranched limit dextrin. The sequence is that of Glycogen debranching enzyme from Yersinia pestis.